Here is a 134-residue protein sequence, read N- to C-terminus: Small ribosomal subunit protein bS16 (134 aa).

Residues 79–134 are disordered; the sequence is AGIAKRPSRNNPTKGEPGKKAQERLALAKQAEEEAAAKAAEAAAAAAAPAEEAASE. The span at 115–134 shows a compositional bias: low complexity; the sequence is AKAAEAAAAAAAPAEEAASE.

The protein belongs to the bacterial ribosomal protein bS16 family.

The polypeptide is Small ribosomal subunit protein bS16 (Brucella canis (strain ATCC 23365 / NCTC 10854 / RM-666)).